The chain runs to 132 residues: Small ribosomal subunit protein uS8 (132 aa).

This sequence belongs to the universal ribosomal protein uS8 family. As to quaternary structure, part of the 30S ribosomal subunit. Contacts proteins S5 and S12.

Functionally, one of the primary rRNA binding proteins, it binds directly to 16S rRNA central domain where it helps coordinate assembly of the platform of the 30S subunit. The sequence is that of Small ribosomal subunit protein uS8 from Borrelia duttonii (strain Ly).